We begin with the raw amino-acid sequence, 869 residues long: Eukaryotic translation initiation factor 3 subunit C (869 aa).

Disordered stretches follow at residues 1–92 (MSRF…KSAK) and 182–242 (IKKA…VGKG). The span at 14 to 55 (SSDEEEDLYSDDEEVQEQPEEESSEDDSEEDDDDDDDSDSSS) shows a compositional bias: acidic residues. Basic and acidic residues predominate over residues 185-203 (ASKEHQKDIDSFRADKDAY). Positions 607–781 (FHMHINLELL…SSIIFRKGVE (175 aa)) constitute a PCI domain. A disordered region spans residues 803–869 (NERTLETRTQ…ALGAAVGSRA (67 aa)). A compositionally biased stretch (gly residues) spans 823-843 (GRGGRGGNRGGRGGGRGGRGG).

The protein belongs to the eIF-3 subunit C family. In terms of assembly, component of the eukaryotic translation initiation factor 3 (eIF-3) complex.

The protein resides in the cytoplasm. In terms of biological role, component of the eukaryotic translation initiation factor 3 (eIF-3) complex, which is involved in protein synthesis of a specialized repertoire of mRNAs and, together with other initiation factors, stimulates binding of mRNA and methionyl-tRNAi to the 40S ribosome. The eIF-3 complex specifically targets and initiates translation of a subset of mRNAs involved in cell proliferation. The polypeptide is Eukaryotic translation initiation factor 3 subunit C (nip1) (Botryotinia fuckeliana (strain B05.10) (Noble rot fungus)).